The sequence spans 787 residues: Zinc finger protein 227 (787 aa).

The KRAB domain maps to 23–94 (VTFKDVAVVF…ERETQRNGHS (72 aa)). C2H2-type zinc fingers lie at residues 243–275 (HPCR…LQTH), 312–334 (YRCD…YRTH), 340–362 (YRCE…QRVH), 368–390 (YKCE…QRVH), 396–418 (YKCE…QRVH), 424–446 (YKCD…RRVH), 452–474 (YRCE…FRVH), 480–502 (YTCK…QNVH), 508–530 (FKCE…QRVH), 536–558 (YRCD…QVIH), 564–586 (YTCE…QRVH), 592–614 (YKCE…QRVH), 620–642 (YKCG…QRVH), 648–670 (YKCD…QRGH), 676–698 (YKCE…QRVH), 704–726 (HKCE…LSVH), 732–754 (FKCE…QRVH), and 760–782 (YKCN…QKVH).

The protein belongs to the krueppel C2H2-type zinc-finger protein family.

It localises to the nucleus. Its function is as follows. May be involved in transcriptional regulation. The sequence is that of Zinc finger protein 227 (ZNF227) from Bos taurus (Bovine).